The sequence spans 230 residues: MAKRGKKYVEAAKLVDRAAAYSATEAVELVKKTNTAKFDATVEAAFRLGVDPKKADQQIRGAVVLPHGTGKVQRVLVFAKGEKAKEAEAAGADFVGDTDYIGKIQQGWFDFDVVVATPDMMGEVGKLGRVLGPKGLMPNPKTGTVTFDVTKAVNEIKAGKVEYRVDKAGNIHVPIGKVSFEDAKLVENFKTIADTLLKVKPSAAKGTYMKNVTVASTMGPGVRVDVSTLA.

Belongs to the universal ribosomal protein uL1 family. As to quaternary structure, part of the 50S ribosomal subunit.

In terms of biological role, binds directly to 23S rRNA. The L1 stalk is quite mobile in the ribosome, and is involved in E site tRNA release. Protein L1 is also a translational repressor protein, it controls the translation of the L11 operon by binding to its mRNA. This is Large ribosomal subunit protein uL1 from Bacillus cereus (strain G9842).